The following is a 270-amino-acid chain: SURF1-like protein (270 aa).

The next 2 helical transmembrane spans lie at 7-29 (GFKL…VYRY) and 246-265 (YIGT…FRYM).

It belongs to the SURF1 family.

The protein localises to the mitochondrion inner membrane. Probably involved in the biogenesis of the COX complex. In Dictyostelium discoideum (Social amoeba), this protein is SURF1-like protein (surf1-1).